Here is a 134-residue protein sequence, read N- to C-terminus: Large ribosomal subunit protein bL20 (134 aa).

Belongs to the bacterial ribosomal protein bL20 family.

Its function is as follows. Binds directly to 23S ribosomal RNA and is necessary for the in vitro assembly process of the 50S ribosomal subunit. It is not involved in the protein synthesizing functions of that subunit. This is Large ribosomal subunit protein bL20 from Rhizobium etli (strain ATCC 51251 / DSM 11541 / JCM 21823 / NBRC 15573 / CFN 42).